Here is a 358-residue protein sequence, read N- to C-terminus: Ion-translocating oxidoreductase complex subunit D (358 aa).

4 consecutive transmembrane segments (helical) span residues 19–39 (IMLW…YYFG), 41–61 (GVVL…FIAI), 79–99 (LTAL…VIII), and 125–145 (IGYV…MPPI). Threonine 186 is modified (FMN phosphoryl threonine). A run of 5 helical transmembrane segments spans residues 220–240 (FAQG…FLIL), 248–268 (IPVA…FTGF), 271–291 (LSAI…FIAT), 297–317 (SITP…VYLI), and 321–341 (GNYP…VPLI).

This sequence belongs to the NqrB/RnfD family. As to quaternary structure, the complex is composed of six subunits: RnfA, RnfB, RnfC, RnfD, RnfE and RnfG. Requires FMN as cofactor.

Its subcellular location is the cell inner membrane. Its function is as follows. Part of a membrane-bound complex that couples electron transfer with translocation of ions across the membrane. The polypeptide is Ion-translocating oxidoreductase complex subunit D (Haemophilus influenzae (strain PittGG)).